The chain runs to 607 residues: Glycerophosphodiester phosphodiesterase domain-containing protein 5 (607 aa).

The Cytoplasmic segment spans residues 1 to 42 (MVRHQPLQYYEPQLCLSCLTGIYGCRWKRYQRSHDDTTPWER). Intrachain disulfides connect Cys15–Cys18 and Cys25–Cys571. Residues 43-63 (LWFLLLVCTFSLTLTWLYFWW) traverse the membrane as a helical segment. Topologically, residues 64-89 (GVHNDYDEFNWYLYNRMGYWSDWSVP) are extracellular. The chain crosses the membrane as a helical span at residues 90–110 (ILVTSAAAFTYIAGLLVLALC). The Cytoplasmic segment spans residues 111–125 (HIAVGQQLNLHWIHK). Residues 126-146 (MGLVVILASTVVAMSAVAQLW) traverse the membrane as a helical segment. At 147 to 160 (EDEWEVLLISLQGT) the chain is on the extracellular side. The helical transmembrane segment at 161–181 (APFLHIGALVAITALSWIVAG) threads the bilayer. The Cytoplasmic segment spans residues 182–192 (QFARAERSSSQ). A helical transmembrane segment spans residues 193–213 (LTILCTFFAVVFTFYLIPLTI). At 214–496 (SSPCIMEKKD…PLWIMPPDEY (283 aa)) the chain is on the extracellular side. Residues 228–485 (PALIGHRGAP…DNSHTLSRVP (258 aa)) enclose the GP-PDE domain. Asn301, Asn336, Asn352, Asn374, and Asn448 each carry an N-linked (GlcNAc...) asparagine glycan. The chain crosses the membrane as a helical span at residues 497 to 517 (CLMWVTADLISFSLIIGIFVL). Residues 518 to 607 (QKWRLGGIRS…AKTVTEQSGH (90 aa)) lie on the Cytoplasmic side of the membrane. Residues 582–607 (ANSTATPVGPRNAGSRAKTVTEQSGH) form a disordered region.

It belongs to the glycerophosphoryl diester phosphodiesterase family. As to quaternary structure, interacts with PRDX1; forms a mixed-disulfide with PRDX1, leading to disrupt intramolecular disulfide bond between Cys-25 and Cys-571. Intramolecular disulfide bond between Cys-25 and Cys-571 is reduced by PRDX1. As to expression, detected in brain, lung, heart, kidney and testis.

Its subcellular location is the endomembrane system. It is found in the cytoplasm. The protein localises to the perinuclear region. The protein resides in the cell projection. It localises to the growth cone. It carries out the reaction a 1,2-diacyl-sn-glycero-3-phospho-(1D-myo-inositol-4,5-bisphosphate) + H2O = 1D-myo-inositol 1,4,5-trisphosphate + a 1,2-diacyl-sn-glycerol + H(+). The enzyme catalyses sn-glycerol 3-phosphocholine + H2O = sn-glycerol 3-phosphate + choline + H(+). Inhibited by high level of NaCl or urea. In terms of biological role, glycerophosphodiester phosphodiesterase that promotes neurite formation and drives spinal motor neuron differentiation. Mediates the cleavage of glycosylphosphatidylinositol (GPI) anchor of target proteins: removes the GPI-anchor of RECK, leading to release RECK from the plasma membrane. May contribute to the osmotic regulation of cellular glycerophosphocholine. This chain is Glycerophosphodiester phosphodiesterase domain-containing protein 5, found in Mus musculus (Mouse).